Consider the following 434-residue polypeptide: 26S proteasome regulatory subunit RPN6 (434 aa).

An N-acetylserine modification is found at Ser-2. The PCI domain occupies 235–404 (AFSYFFESFE…GWLYVYETPN (170 aa)).

The protein belongs to the proteasome subunit S9 family. In terms of assembly, component of the lid subcomplex of the 19S proteasome regulatory particle complex (also named PA700 complex). The 26S proteasome consists of a 20S proteasome core and two 19S regulatory subunits. In terms of processing, N-acetylated by NAT1.

Component of the lid subcomplex of the 26S proteasome, a multiprotein complex involved in the ATP-dependent degradation of ubiquitinated proteins. In the complex, RPN6 is required for proteasome assembly. The polypeptide is 26S proteasome regulatory subunit RPN6 (RPN6) (Saccharomyces cerevisiae (strain ATCC 204508 / S288c) (Baker's yeast)).